The following is a 471-amino-acid chain: MSSKTLYDKVWDLHRIADLPGGATQLFVGLHLIHEVTSPQAFAALEEKGLSVNCPDRTIATVDHIVPTTNHQRPFSDPLAEEMLHTLEKNCSNHHIKLFGIGSGNQGIVHVMAPESGLTQPGMTIACGDSHTSTHGAFGAIAFGIGTSQVRDVLATQSLAMKKLKVRRIWVDGQLTNGVFAKDLILHVIRHLGVKGGVGYAYEFAGPAIKKLSMEERMTICNMAIEGGARCGYVNPDQTTFDYLEGKPYIPTGQEWESALQWWKELASDQNAIFDDEVKFDACKISPTVTWGITPGQAIGIDELIPKVDSLETSDQQTAREAYLYMNLHPGSSIEGLGIDVCFIGSCTNGRLSDLQAAAKIVKNRHVAKGIKAFVVPGSEKVAKAAEAEGLDVLFQNAGFEWRKPGCSMCLAMNPDRLEGNQISASSSNRNFKGRQGSARGRTLLMSPAMVAAAAISGSVTDVRNLINQGP.

[4Fe-4S] cluster-binding residues include Cys-347, Cys-407, and Cys-410.

It belongs to the aconitase/IPM isomerase family. LeuC type 1 subfamily. As to quaternary structure, heterodimer of LeuC and LeuD. Requires [4Fe-4S] cluster as cofactor.

The catalysed reaction is (2R,3S)-3-isopropylmalate = (2S)-2-isopropylmalate. The protein operates within amino-acid biosynthesis; L-leucine biosynthesis; L-leucine from 3-methyl-2-oxobutanoate: step 2/4. In terms of biological role, catalyzes the isomerization between 2-isopropylmalate and 3-isopropylmalate, via the formation of 2-isopropylmaleate. The protein is 3-isopropylmalate dehydratase large subunit of Prochlorococcus marinus (strain MIT 9211).